The sequence spans 712 residues: tRNA 5-methylaminomethyl-2-thiouridine biosynthesis bifunctional protein MnmC (712 aa).

Positions 1-268 are tRNA (mnm(5)s(2)U34)-methyltransferase; it reads MPNMRHRVNS…RRALRHAQSD (268 aa). The segment at 292-712 is FAD-dependent cmnm(5)s(2)U34 oxidoreductase; sequence IGGGVASTHL…MRKLIKGKAL (421 aa).

The protein in the N-terminal section; belongs to the methyltransferase superfamily. tRNA (mnm(5)s(2)U34)-methyltransferase family. It in the C-terminal section; belongs to the DAO family. FAD serves as cofactor.

Its subcellular location is the cytoplasm. It carries out the reaction 5-aminomethyl-2-thiouridine(34) in tRNA + S-adenosyl-L-methionine = 5-methylaminomethyl-2-thiouridine(34) in tRNA + S-adenosyl-L-homocysteine + H(+). Its function is as follows. Catalyzes the last two steps in the biosynthesis of 5-methylaminomethyl-2-thiouridine (mnm(5)s(2)U) at the wobble position (U34) in tRNA. Catalyzes the FAD-dependent demodification of cmnm(5)s(2)U34 to nm(5)s(2)U34, followed by the transfer of a methyl group from S-adenosyl-L-methionine to nm(5)s(2)U34, to form mnm(5)s(2)U34. This Shewanella sediminis (strain HAW-EB3) protein is tRNA 5-methylaminomethyl-2-thiouridine biosynthesis bifunctional protein MnmC.